Here is a 148-residue protein sequence, read N- to C-terminus: Lipoprotein signal peptidase (148 aa).

The next 2 membrane-spanning stretches (helical) occupy residues 57–77 and 80–100; these read QWIF…YLNT and VHIF…GNLI. Catalysis depends on residues aspartate 110 and aspartate 126. Residues 124–144 traverse the membrane as a helical segment; sequence IADVFVVVGTVFLCIYVLFFE.

It belongs to the peptidase A8 family.

The protein localises to the cell membrane. It carries out the reaction Release of signal peptides from bacterial membrane prolipoproteins. Hydrolyzes -Xaa-Yaa-Zaa-|-(S,diacylglyceryl)Cys-, in which Xaa is hydrophobic (preferably Leu), and Yaa (Ala or Ser) and Zaa (Gly or Ala) have small, neutral side chains.. It participates in protein modification; lipoprotein biosynthesis (signal peptide cleavage). Its function is as follows. This protein specifically catalyzes the removal of signal peptides from prolipoproteins. This is Lipoprotein signal peptidase from Clostridioides difficile (strain 630) (Peptoclostridium difficile).